Here is a 210-residue protein sequence, read N- to C-terminus: MKKEDPNLSLFSFLDEDIICGVDEAGRGPLAGPVFAAAVILDPMRPIDGLRDSKKLTEVKRDALAIEIKQYALSWSIAQCSEEEIDSLNILQATMLAMRRAIEGLHVVPTLALIDGNRCPVTSVRSEAIIKGDDKVQAISAASILAKTARDHALGLLHIQYPHYAFDQHKGYPTALHLERLREHGVSPVHRKSYAPVRALLGGVTPANKV.

In terms of domain architecture, RNase H type-2 spans 17–206; it reads DIICGVDEAG…VRALLGGVTP (190 aa). Residues Asp23, Glu24, and Asp115 each contribute to the a divalent metal cation site.

It belongs to the RNase HII family. Mn(2+) is required as a cofactor. The cofactor is Mg(2+).

It is found in the cytoplasm. The catalysed reaction is Endonucleolytic cleavage to 5'-phosphomonoester.. In terms of biological role, endonuclease that specifically degrades the RNA of RNA-DNA hybrids. This is Ribonuclease HII from Janthinobacterium sp. (strain Marseille) (Minibacterium massiliensis).